A 2083-amino-acid chain; its full sequence is Centriole proteome protein 16 (2083 aa).

Residues 205–333 form a disordered region; that stretch reads DAPTMDFMPP…PAVPPPLSPS (129 aa). Positions 227–245 are enriched in low complexity; the sequence is TAETADTAGAAGRKSLSGA. Over residues 246 to 258 the composition is skewed to gly residues; it reads SAGGAGPAKGGAK. 2 stretches are compositionally biased toward low complexity: residues 259-274 and 283-292; these read AGAAAGGKRAVSSAGA and GSTAGAATPG. Positions 302 to 315 are enriched in acidic residues; it reads GEEDFEDDLSEDLD. Over residues 319 to 331 the composition is skewed to pro residues; sequence PLPPSPAVPPPLS. WD repeat units follow at residues 482–523, 526–569, 579–620, 689–726, 728–767, 770–809, 812–853, 856–895, 990–1029, and 1041–1079; these read GHTA…CLAI, AHAS…AAGG, ATEY…GTSV, LHAAAINCLVVSDGLVLTGGDDRLLRAWPLDFRDYLLE, EHEGAVTGLAMSTDALRLAVGTENGTLGVLAIPTHAYTTL, SHCGAVNAVAVDPNRDQYCTVSSDGTLRIWHLATHQQLYE, APGE…LLQE, QHRAGITELLFSPGGDRLFSGGADGALVVYDTARMYAPAQ, VSPLELTALCLDPAGRYAATAGADGLLRLWGCVPLPALRG, and GHPSAILGAAFHRSGYLVTVGDADCVCVWRVNADHMQQE. 2 disordered regions span residues 1113–1141 and 1225–1276; these read HTQATGALDPTDPRSRAHPSTALGPVASA and ALVV…PPPP. Over residues 1263-1276 the composition is skewed to pro residues; the sequence is VPLPPSPQPLPPPP. WD repeat units follow at residues 1326 to 1365, 1403 to 1444, 1448 to 1486, 1497 to 1539, 1651 to 1691, 1736 to 1781, and 1785 to 1824; these read GHNRPLSCLAASPDGALVAAGPAAAEPAFTEPAAGARAAQ, YHPL…LVAA, EQSPRAAAWLWGGHNPAFATAGADGLLLWTLQDNFLEQR, RDPR…QPPQ, GQAA…AEPA, DPLD…QLSW, and RHPAPVVGVAPHPRRGLVLSASSDGSLAVTDLSSTRLVSY. Residues 1713–1743 form a disordered region; that stretch reads APAHTLRHPPSAAPSSAASSSPLDPLDPLPA. Residues 1720–1743 show a composition bias toward low complexity; sequence HPPSAAPSSAASSSPLDPLDPLPA. The tract at residues 1832–1870 is disordered; the sequence is GPTPHSPGGTGRRSPRGAASPPPAPPRPGTGPLQAMAVS. The segment covering 1851–1860 has biased composition (pro residues); sequence SPPPAPPRPG. The WD 18 repeat unit spans residues 2035-2073; the sequence is GHAGAVAAASYTGDGGHAVTASGSVLMVWDAAQLLKGVT.

This sequence belongs to the WD repeat WDR90/POC16 family.

The protein localises to the cytoplasm. It is found in the cytoskeleton. The protein resides in the microtubule organizing center. It localises to the centrosome. Its subcellular location is the centriole. Its function is as follows. Required for flagellum assembly and/or maintenance. The polypeptide is Centriole proteome protein 16 (Chlamydomonas reinhardtii (Chlamydomonas smithii)).